Reading from the N-terminus, the 919-residue chain is WD repeat-containing protein 47 (919 aa).

The LisH domain maps to 10 to 42 (KEVEIIKLILDFLNSKKLHISMLALEKESGVIN). The CTLH domain occupies 45–102 (FSDDMLFLRQLILDGQWDEVLQFIQPLECMEKFDKKRFRYIILKQKFLEALCVNNAMS). Phosphothreonine is present on T285. Residues S289, S292, S297, and S312 each carry the phosphoserine modification. The tract at residues 393-421 (GQSSVSEKEPANGAQNPGPAKQEKNELRD) is disordered. S422 is modified (phosphoserine). The disordered stretch occupies residues 500–590 (LNQQCNGSKG…SLSRSKGEED (91 aa)). Positions 517-551 (VTSFTTPPQDSSQRLTHDASNIHTSTPRNPGSTNH) are enriched in polar residues. Phosphothreonine is present on T542. 7 WD repeats span residues 604–643 (EDTQAVRAVAFHPAGGLYAVGSNSKTLRVCAYPDVIDPSA), 659–698 (HHKGSIYCVAWSPCGQLLATGSNDKYVKVLPFNAETCNAT), 706–748 (MHDG…GQGL), 753–791 (GHTGHILALYTWSGWMIASGSQDKTVRFWDLRVPSCVRV), 798–837 (GTGSAVASVAVDPSGRLLATGQEDSSCMLYDIRGGRMVQS), 840–879 (PHSSDVRSVRFSPGAHYLLTGSYDMKIKVTDLQGDLTKQL), and 886–918 (EHKDKVIQCRWHTQDLSFLSSSADRTVTLWTYN).

As to quaternary structure, interacts with MAP1S (via WD repeats).

Its subcellular location is the cytoplasm. It is found in the cytoskeleton. This chain is WD repeat-containing protein 47 (WDR47), found in Homo sapiens (Human).